An 81-amino-acid chain; its full sequence is Defensin-like protein 144 (81 aa).

The N-terminal stretch at 1–24 (MKNSFRFSFTVITTFIICVLVSGA) is a signal peptide. Disulfide bonds link C30–C74, C42–C61, C47–C69, and C51–C71.

It belongs to the DEFL family.

It localises to the secreted. The polypeptide is Defensin-like protein 144 (LCR10) (Arabidopsis thaliana (Mouse-ear cress)).